We begin with the raw amino-acid sequence, 211 residues long: Uracil phosphoribosyltransferase (211 aa).

Residues Arg78, Arg103, and Asp130–Thr138 contribute to the 5-phospho-alpha-D-ribose 1-diphosphate site. Residues Ile195 and Gly200–Ala202 contribute to the uracil site. Asp201 contributes to the 5-phospho-alpha-D-ribose 1-diphosphate binding site.

It belongs to the UPRTase family. Mg(2+) is required as a cofactor.

It catalyses the reaction UMP + diphosphate = 5-phospho-alpha-D-ribose 1-diphosphate + uracil. The protein operates within pyrimidine metabolism; UMP biosynthesis via salvage pathway; UMP from uracil: step 1/1. With respect to regulation, allosterically activated by GTP. Functionally, catalyzes the conversion of uracil and 5-phospho-alpha-D-ribose 1-diphosphate (PRPP) to UMP and diphosphate. This chain is Uracil phosphoribosyltransferase, found in Arthrobacter sp. (strain FB24).